A 304-amino-acid polypeptide reads, in one-letter code: UDP-3-O-acyl-N-acetylglucosamine deacetylase (304 aa).

Positions 77, 233, and 237 each coordinate Zn(2+). The Proton donor role is filled by H260.

The protein belongs to the LpxC family. Requires Zn(2+) as cofactor.

The enzyme catalyses a UDP-3-O-[(3R)-3-hydroxyacyl]-N-acetyl-alpha-D-glucosamine + H2O = a UDP-3-O-[(3R)-3-hydroxyacyl]-alpha-D-glucosamine + acetate. It functions in the pathway glycolipid biosynthesis; lipid IV(A) biosynthesis; lipid IV(A) from (3R)-3-hydroxytetradecanoyl-[acyl-carrier-protein] and UDP-N-acetyl-alpha-D-glucosamine: step 2/6. Catalyzes the hydrolysis of UDP-3-O-myristoyl-N-acetylglucosamine to form UDP-3-O-myristoylglucosamine and acetate, the committed step in lipid A biosynthesis. The chain is UDP-3-O-acyl-N-acetylglucosamine deacetylase from Lawsonia intracellularis (strain PHE/MN1-00).